The following is a 258-amino-acid chain: Putative phosphoenolpyruvate synthase regulatory protein (258 aa).

Residue 146-153 coordinates ADP; that stretch reads GVSRVGKT.

It belongs to the pyruvate, phosphate/water dikinase regulatory protein family. PSRP subfamily.

It catalyses the reaction [pyruvate, water dikinase] + ADP = [pyruvate, water dikinase]-phosphate + AMP + H(+). The enzyme catalyses [pyruvate, water dikinase]-phosphate + phosphate + H(+) = [pyruvate, water dikinase] + diphosphate. Bifunctional serine/threonine kinase and phosphorylase involved in the regulation of the phosphoenolpyruvate synthase (PEPS) by catalyzing its phosphorylation/dephosphorylation. The polypeptide is Putative phosphoenolpyruvate synthase regulatory protein (Thiobacillus denitrificans (strain ATCC 25259 / T1)).